The following is a 421-amino-acid chain: Gamma-glutamyl phosphate reductase (421 aa).

The protein belongs to the gamma-glutamyl phosphate reductase family.

The protein resides in the cytoplasm. It carries out the reaction L-glutamate 5-semialdehyde + phosphate + NADP(+) = L-glutamyl 5-phosphate + NADPH + H(+). Its pathway is amino-acid biosynthesis; L-proline biosynthesis; L-glutamate 5-semialdehyde from L-glutamate: step 2/2. Its function is as follows. Catalyzes the NADPH-dependent reduction of L-glutamate 5-phosphate into L-glutamate 5-semialdehyde and phosphate. The product spontaneously undergoes cyclization to form 1-pyrroline-5-carboxylate. The sequence is that of Gamma-glutamyl phosphate reductase from Pseudomonas savastanoi pv. phaseolicola (strain 1448A / Race 6) (Pseudomonas syringae pv. phaseolicola (strain 1448A / Race 6)).